The chain runs to 129 residues: Lysozyme C-1 (129 aa).

In terms of domain architecture, C-type lysozyme spans 1–129; the sequence is KVFERCELAR…VSSYVEGCTL (129 aa). Disulfide bonds link cysteine 6/cysteine 127, cysteine 30/cysteine 115, cysteine 65/cysteine 81, and cysteine 77/cysteine 95. Catalysis depends on residues glutamate 35 and aspartate 53.

It belongs to the glycosyl hydrolase 22 family. Monomer.

The catalysed reaction is Hydrolysis of (1-&gt;4)-beta-linkages between N-acetylmuramic acid and N-acetyl-D-glucosamine residues in a peptidoglycan and between N-acetyl-D-glucosamine residues in chitodextrins.. Functionally, lysozymes have primarily a bacteriolytic function; those in tissues and body fluids are associated with the monocyte-macrophage system and enhance the activity of immunoagents. The polypeptide is Lysozyme C-1 (Capra hircus (Goat)).